The primary structure comprises 272 residues: NH(3)-dependent NAD(+) synthetase (272 aa).

45 to 52 (GISGGQDS) contacts ATP. Mg(2+) is bound at residue aspartate 51. A deamido-NAD(+)-binding site is contributed by arginine 138. Threonine 158 lines the ATP pocket. Glutamate 163 contacts Mg(2+). 2 residues coordinate deamido-NAD(+): lysine 171 and aspartate 178. ATP contacts are provided by lysine 187 and threonine 209. A deamido-NAD(+)-binding site is contributed by 258-259 (HK).

This sequence belongs to the NAD synthetase family. As to quaternary structure, homodimer.

The enzyme catalyses deamido-NAD(+) + NH4(+) + ATP = AMP + diphosphate + NAD(+) + H(+). It functions in the pathway cofactor biosynthesis; NAD(+) biosynthesis; NAD(+) from deamido-NAD(+) (ammonia route): step 1/1. In terms of biological role, catalyzes the ATP-dependent amidation of deamido-NAD to form NAD. Uses ammonia as a nitrogen source. The chain is NH(3)-dependent NAD(+) synthetase from Bacillus cereus (strain AH187).